The sequence spans 180 residues: Cytochrome b6-f complex iron-sulfur subunit (180 aa).

A helical transmembrane segment spans residues 21–43 (LLTFGTITGTALGALYPVVKYFI). Residues 66–162 (VSEYLAKHLP…ATVTEDDKLV (97 aa)) enclose the Rieske domain. 4 residues coordinate [2Fe-2S] cluster: Cys108, His110, Cys126, and His129. Cysteines 113 and 128 form a disulfide.

This sequence belongs to the Rieske iron-sulfur protein family. In terms of assembly, the 4 large subunits of the cytochrome b6-f complex are cytochrome b6, subunit IV (17 kDa polypeptide, PetD), cytochrome f and the Rieske protein, while the 4 small subunits are PetG, PetL, PetM and PetN. The complex functions as a dimer. The cofactor is [2Fe-2S] cluster.

The protein localises to the cellular thylakoid membrane. It carries out the reaction 2 oxidized [plastocyanin] + a plastoquinol + 2 H(+)(in) = 2 reduced [plastocyanin] + a plastoquinone + 4 H(+)(out). In terms of biological role, component of the cytochrome b6-f complex, which mediates electron transfer between photosystem II (PSII) and photosystem I (PSI), cyclic electron flow around PSI, and state transitions. The polypeptide is Cytochrome b6-f complex iron-sulfur subunit (Thermosynechococcus vestitus (strain NIES-2133 / IAM M-273 / BP-1)).